A 244-amino-acid chain; its full sequence is Tyrosine recombinase XerD-like (244 aa).

In terms of domain architecture, Core-binding (CB) spans 1 to 73 (MRDRISAFLE…ACNQFLYFLY (73 aa)). Residues 90 to 244 (AEKKTEKPEI…KTVLTLEKYR (155 aa)) enclose the Tyr recombinase domain. Catalysis depends on residues Lys150 and Arg211. Tyr243 (O-(3'-phospho-DNA)-tyrosine intermediate) is an active-site residue.

It belongs to the 'phage' integrase family. XerD-like subfamily.

It is found in the cytoplasm. In terms of biological role, putative tyrosine recombinase. Not involved in the cutting and rejoining of the recombining DNA molecules on dif(SL) site. The chain is Tyrosine recombinase XerD-like from Streptococcus pneumoniae (strain CGSP14).